We begin with the raw amino-acid sequence, 1507 residues long: Histone-lysine N-methyltransferase set-2 (1507 aa).

Residues 1–32 (MSTHDMNHHPPRKSHSKRDKPSSSNSGPKIEN) form a disordered region. A compositionally biased stretch (basic residues) spans 9-18 (HPPRKSHSKR). The 72-residue stretch at 128 to 199 (VSLFNMDDNC…QNLLATKCTP (72 aa)) folds into the RRM domain. Disordered regions lie at residues 280 to 578 (DYTM…QPQM), 650 to 697 (EPFS…EEPA), 803 to 826 (DEEK…SNHL), 842 to 1058 (SSRG…GPII), and 1163 to 1199 (QKPR…FKPR). The segment covering 296–315 (PIPPPPIKEESPPPPPPPPV) has biased composition (pro residues). The segment covering 316-327 (ASVSNLAPVPSV) has biased composition (low complexity). Polar residues predominate over residues 331–342 (YYNNIQPSSSTM). Residues 413–444 (VKYETYKMEKRKIKYEGGNKKYEQVHIKERTA) are compositionally biased toward basic and acidic residues. The segment covering 456-465 (SSESASGSSS) has biased composition (low complexity). A compositionally biased stretch (basic residues) spans 478–488 (KKKKRPKSPNR). Over residues 566-575 (HLQTPYQHVQ) the composition is skewed to polar residues. 2 stretches are compositionally biased toward basic and acidic residues: residues 668–680 (DVGR…KPSL) and 803–823 (DEEK…EKPS). The span at 846-868 (FYRKQKPIPKSHPKHQEHHHHAK) shows a compositional bias: basic residues. The segment covering 869–908 (ASVSTPVHSSSTSRNSSVAPTPQRTVSTSSSSSSAATSAR) has biased composition (low complexity). Polar residues predominate over residues 941 to 951 (SFSSTSIQSSP). Low complexity predominate over residues 958–971 (SSSSRTSSSSSTSS). Basic and acidic residues predominate over residues 973–982 (KQEETADEKS). Low complexity predominate over residues 990 to 1007 (SSDESSTTGSTATSVVSS). Residues 1015–1047 (QQEKTDGEPPKKKSQTDFISERVSKIEGEERPL) are compositionally biased toward basic and acidic residues. Positions 1179-1190 (EPPPTKRPAPPP) are enriched in pro residues. The RxxxRR motif motif lies at 1340 to 1345 (RLLQRR). In terms of domain architecture, SET spans 1368-1485 (KMIKFARSRI…KGEEITYDYK (118 aa)). Tyr-1484 provides a ligand contact to S-adenosyl-L-methionine. In terms of domain architecture, Post-SET spans 1491–1507 (DKIDCLCGAKTCRGYLN).

This sequence belongs to the class V-like SAM-binding methyltransferase superfamily. In terms of assembly, component of the Set1C/COMPASS complex (also known as the SET2 complex), which contains at least set-2, swd-2.1, cfp-1, rbbp-5, wdr-5.1, dpy-30 and ash-2. As to expression, expressed in all cells of embryo. In L1 larva, it is predominantly expressed in Z2 and Z3 primordial germ cells. In adults, it is predominantly expressed in the germline.

The protein localises to the nucleus. The enzyme catalyses L-lysyl(4)-[histone H3] + 3 S-adenosyl-L-methionine = N(6),N(6),N(6)-trimethyl-L-lysyl(4)-[histone H3] + 3 S-adenosyl-L-homocysteine + 3 H(+). The catalysed reaction is N(6)-methyl-L-lysyl(4)-[histone H3] + S-adenosyl-L-methionine = N(6),N(6)-dimethyl-L-lysyl(4)-[histone H3] + S-adenosyl-L-homocysteine + H(+). It catalyses the reaction N(6),N(6)-dimethyl-L-lysyl(4)-[histone H3] + S-adenosyl-L-methionine = N(6),N(6),N(6)-trimethyl-L-lysyl(4)-[histone H3] + S-adenosyl-L-homocysteine + H(+). Its function is as follows. Catalytic component of the COMPASS (Set1C) complex that specifically mono-, di- and trimethylates histone H3 to form H3K4me1/2/3. Binds RNAs which might negatively affect its histone methyltransferase activity. COMPASS recognizes ubiquitinated H2B on one face of the nucleosome which stimulates the methylation of H3 on the opposing face. H3 'Lys-4' methylation represents a specific tag for epigenetic transcriptional activation. Implicated in the epigenetic inheritance of lifespan over several generations. Acts in the germline to limit the longevity of the soma, probably by regulating a lipid metabolism pathway that signals from the germline to the intestine, thereby preventing accumulation of mono-unsaturated fatty acids. Methylation in the germline is required for germline development and fertility, possibly by ensuring genome stability. May act redundantly with mes-3 and mes-4 proteins in the development of a fertile germline. Required for RNAi. Functions as an antagonist of hpl-1 and hpl-2 activity in growth and somatic gonad development. Cooperates with jmjd-3.1 and egl-27 to ensure robust transdifferentiation of the Y rectal cell to the PDA motor neuron during larval development. The sequence is that of Histone-lysine N-methyltransferase set-2 (set-2) from Caenorhabditis elegans.